The sequence spans 260 residues: UPF0246 protein Bcep18194_A5551 (260 aa).

This sequence belongs to the UPF0246 family.

The polypeptide is UPF0246 protein Bcep18194_A5551 (Burkholderia lata (strain ATCC 17760 / DSM 23089 / LMG 22485 / NCIMB 9086 / R18194 / 383)).